Here is a 186-residue protein sequence, read N- to C-terminus: Lipid A palmitoyltransferase PagP (186 aa).

The N-terminal stretch at 1 to 25 is a signal peptide; the sequence is MNVSKYVAIFSFVFIQLISVGKVFA. Catalysis depends on residues histidine 58, aspartate 101, and serine 102.

Belongs to the lipid A palmitoyltransferase family. As to quaternary structure, homodimer.

The protein resides in the cell outer membrane. The catalysed reaction is lipid A (E. coli) + a 1-hexadecanoyl-2-acyl-sn-glycero-3-phosphocholine = hepta-acyl lipid A (E. coli) + a 2-acyl-sn-glycero-3-phosphocholine. The enzyme catalyses lipid IIA + a 1-hexadecanoyl-2-acyl-sn-glycero-3-phosphocholine = lipid IIB + a 2-acyl-sn-glycero-3-phosphocholine. It catalyses the reaction lipid IVA (E. coli) + a 1-hexadecanoyl-2-acyl-sn-glycero-3-phosphocholine = lipid IVB (E. coli) + a 2-acyl-sn-glycero-3-phosphocholine. Its function is as follows. Transfers a palmitate residue from the sn-1 position of a phospholipid to the N-linked hydroxymyristate on the proximal unit of lipid A or its precursors. This Escherichia coli O157:H7 protein is Lipid A palmitoyltransferase PagP.